The following is a 238-amino-acid chain: Protein lifeguard 4 (238 aa).

The Cytoplasmic portion of the chain corresponds to 1–38; the sequence is MADTDPGYPRSSIEDDFNYGSCVASASVHIRMAFLRKV. A helical transmembrane segment spans residues 39-59; that stretch reads YSILSLQVLLTTVTSALFLYF. Residues 60-68 lie on the Lumenal side of the membrane; it reads QALRTFVHE. A helical membrane pass occupies residues 69-89; sequence SPALIVVFALGSLGLIFALTL. At 90–97 the chain is on the cytoplasmic side; sequence HRHTHPLN. The helical transmembrane segment at 98–118 threads the bilayer; that stretch reads LYLLFAFTLSESLAVAAVVTF. Residues 119-120 lie on the Lumenal side of the membrane; that stretch reads YD. Residues 121–141 form a helical membrane-spanning segment; the sequence is VYLVLQAFIMTTAVFLGLTAY. At 142–151 the chain is on the cytoplasmic side; it reads TLQSKRDFTK. The helical transmembrane segment at 152 to 172 threads the bilayer; the sequence is FGAGLFAGLWILCLAGFLKLF. The Lumenal segment spans residues 173-175; sequence FYS. Residues 176–196 form a helical membrane-spanning segment; that stretch reads ETMELVLASLGALLFCGFIIY. The Cytoplasmic segment spans residues 197 to 208; the sequence is DTHSLMHRLSPE. An intramembrane region (helical) is located at residues 209 to 229; that stretch reads EYVIAAISLYMDIINLFLHLL. Topologically, residues 230–238 are cytoplasmic; it reads KFLEAVNKK.

It belongs to the BI1 family. LFG subfamily. Interacts with ITPR3.

The protein localises to the golgi apparatus membrane. Functionally, anti-apoptotic protein which can inhibit apoptosis induced by intrinsic and extrinsic apoptotic stimuli. Can modulate both capacitative Ca2+ entry and inositol 1,4,5-trisphosphate (IP3)-mediated Ca2+ release. This is Protein lifeguard 4 (Tmbim4) from Mus musculus (Mouse).